Here is a 458-residue protein sequence, read N- to C-terminus: MAGHQPILTVSEVTRHLKRTIEDDPLLQDVWMRGEISNFKHHSRGHMYFTLKDEHAKMSAVMFAGNNRFLNFKPENGMKVIVRGEVNVYEPFGQYQLYALEMQPDGIGNLYLAYEQLKERLEQEGLFKEENKKPLPPVARQIAIVTSPTGAAIRDIASTIKRRFPVAQLTLLPVLVQGEEAPHSIAKAIRQANEVGGFDLLIVGRGGGSIEELWAFNEELVARAIYQSVIPIISAVGHETDYTIADFVADVRAATPTGAAELAVPDLKELISRVNQYTERLKRAQHELLKRQKEHLQRLQKSYAFRYPAQLVKQKELELDQQLERLTKHQRRMVSDAKDRLSQLEYRLKRIHPEGRLRQAEQARVKLEVLLKKEFQQMMERKEQQFQQAISSLNLLSPLRVMERGYALPYKAKTQELIKSVKQVRMNDRLHLRVTDGQLICDVKEIESESGGEGYDQK.

It belongs to the XseA family. Heterooligomer composed of large and small subunits.

It is found in the cytoplasm. The enzyme catalyses Exonucleolytic cleavage in either 5'- to 3'- or 3'- to 5'-direction to yield nucleoside 5'-phosphates.. Bidirectionally degrades single-stranded DNA into large acid-insoluble oligonucleotides, which are then degraded further into small acid-soluble oligonucleotides. In Halalkalibacterium halodurans (strain ATCC BAA-125 / DSM 18197 / FERM 7344 / JCM 9153 / C-125) (Bacillus halodurans), this protein is Exodeoxyribonuclease 7 large subunit.